A 347-amino-acid polypeptide reads, in one-letter code: Probable dual-specificity RNA methyltransferase RlmN (347 aa).

Glutamate 93 serves as the catalytic Proton acceptor. The Radical SAM core domain occupies 99-333 (TEKRLTACLS…VSLRKSRGLD (235 aa)). Cysteine 106 and cysteine 338 form a disulfide bridge. [4Fe-4S] cluster contacts are provided by cysteine 113, cysteine 117, and cysteine 120. S-adenosyl-L-methionine-binding positions include 160–161 (GE), serine 190, 219–221 (SLH), and asparagine 295. The S-methylcysteine intermediate role is filled by cysteine 338.

It belongs to the radical SAM superfamily. RlmN family. It depends on [4Fe-4S] cluster as a cofactor.

The protein resides in the cytoplasm. The enzyme catalyses adenosine(2503) in 23S rRNA + 2 reduced [2Fe-2S]-[ferredoxin] + 2 S-adenosyl-L-methionine = 2-methyladenosine(2503) in 23S rRNA + 5'-deoxyadenosine + L-methionine + 2 oxidized [2Fe-2S]-[ferredoxin] + S-adenosyl-L-homocysteine. The catalysed reaction is adenosine(37) in tRNA + 2 reduced [2Fe-2S]-[ferredoxin] + 2 S-adenosyl-L-methionine = 2-methyladenosine(37) in tRNA + 5'-deoxyadenosine + L-methionine + 2 oxidized [2Fe-2S]-[ferredoxin] + S-adenosyl-L-homocysteine. Functionally, specifically methylates position 2 of adenine 2503 in 23S rRNA and position 2 of adenine 37 in tRNAs. The polypeptide is Probable dual-specificity RNA methyltransferase RlmN (Prochlorococcus marinus (strain MIT 9301)).